The sequence spans 628 residues: tRNA 5-methylaminomethyl-2-thiouridine biosynthesis bifunctional protein MnmC (628 aa).

The tract at residues 1–237 (MSSYSPLVPP…KWHMTVGVRE (237 aa)) is tRNA (mnm(5)s(2)U34)-methyltransferase. An FAD-dependent cmnm(5)s(2)U34 oxidoreductase region spans residues 265–628 (VGGGLAGAGI…ADLLAAVAPR (364 aa)).

This sequence in the N-terminal section; belongs to the methyltransferase superfamily. tRNA (mnm(5)s(2)U34)-methyltransferase family. It in the C-terminal section; belongs to the DAO family. FAD serves as cofactor.

It is found in the cytoplasm. The catalysed reaction is 5-aminomethyl-2-thiouridine(34) in tRNA + S-adenosyl-L-methionine = 5-methylaminomethyl-2-thiouridine(34) in tRNA + S-adenosyl-L-homocysteine + H(+). Its function is as follows. Catalyzes the last two steps in the biosynthesis of 5-methylaminomethyl-2-thiouridine (mnm(5)s(2)U) at the wobble position (U34) in tRNA. Catalyzes the FAD-dependent demodification of cmnm(5)s(2)U34 to nm(5)s(2)U34, followed by the transfer of a methyl group from S-adenosyl-L-methionine to nm(5)s(2)U34, to form mnm(5)s(2)U34. This Bordetella petrii (strain ATCC BAA-461 / DSM 12804 / CCUG 43448) protein is tRNA 5-methylaminomethyl-2-thiouridine biosynthesis bifunctional protein MnmC.